An 87-amino-acid polypeptide reads, in one-letter code: MERKLALLLLLGMITLASSGLREKHVQKLVTLIPNDTLRSIMKTIVHKLAKTQFGCPAYEGYCMNHCQDIERHDGSCHGFKCKCEKS.

An N-terminal signal peptide occupies residues 1 to 19 (MERKLALLLLLGMITLASS). Residues 20–27 (GLREKHVQ) constitute a propeptide that is removed on maturation. The BetaSPN-type CS-alpha/beta domain occupies 53–87 (QFGCPAYEGYCMNHCQDIERHDGSCHGFKCKCEKS). 3 disulfide bridges follow: Cys-56/Cys-77, Cys-63/Cys-82, and Cys-67/Cys-84.

In terms of tissue distribution, expressed by the venom gland.

It localises to the secreted. Inhibits voltage-gated potassium channel. This Tityus discrepans (Venezuelan scorpion) protein is Potassium channel toxin Tdi-beta-KTx.